Here is a 413-residue protein sequence, read N- to C-terminus: Putative adhesin P1-like protein MPN_144 (413 aa).

Polar residues-rich tracts occupy residues 1–13 (MGQQ…SAGN), 25–54 (SGDS…NLTP), and 355–376 (SFGT…VFGT). 2 disordered regions span residues 1–60 (MGQQ…DWPN) and 355–413 (SFGT…VSGH). Residues 385 to 399 (LSGGGAGGGSSGSGQ) are compositionally biased toward gly residues.

It belongs to the adhesin P1 family.

This Mycoplasma pneumoniae (strain ATCC 29342 / M129 / Subtype 1) (Mycoplasmoides pneumoniae) protein is Putative adhesin P1-like protein MPN_144.